Here is a 549-residue protein sequence, read N- to C-terminus: Chaperonin GroEL 5 (549 aa).

Residues 30-33, K51, 87-91, G415, and D495 each bind ATP; these read TLGP and DGTTT.

Belongs to the chaperonin (HSP60) family. In terms of assembly, forms a cylinder of 14 subunits composed of two heptameric rings stacked back-to-back. Interacts with the co-chaperonin GroES.

It localises to the cytoplasm. It carries out the reaction ATP + H2O + a folded polypeptide = ADP + phosphate + an unfolded polypeptide.. Functionally, together with its co-chaperonin GroES, plays an essential role in assisting protein folding. The GroEL-GroES system forms a nano-cage that allows encapsulation of the non-native substrate proteins and provides a physical environment optimized to promote and accelerate protein folding. The sequence is that of Chaperonin GroEL 5 from Mesorhizobium japonicum (strain LMG 29417 / CECT 9101 / MAFF 303099) (Mesorhizobium loti (strain MAFF 303099)).